A 287-amino-acid chain; its full sequence is Bifunctional protein FolD (287 aa).

NADP(+) is bound by residues 166 to 168 (GAS) and Ile232.

Belongs to the tetrahydrofolate dehydrogenase/cyclohydrolase family. In terms of assembly, homodimer.

The enzyme catalyses (6R)-5,10-methylene-5,6,7,8-tetrahydrofolate + NADP(+) = (6R)-5,10-methenyltetrahydrofolate + NADPH. The catalysed reaction is (6R)-5,10-methenyltetrahydrofolate + H2O = (6R)-10-formyltetrahydrofolate + H(+). The protein operates within one-carbon metabolism; tetrahydrofolate interconversion. Its function is as follows. Catalyzes the oxidation of 5,10-methylenetetrahydrofolate to 5,10-methenyltetrahydrofolate and then the hydrolysis of 5,10-methenyltetrahydrofolate to 10-formyltetrahydrofolate. The polypeptide is Bifunctional protein FolD (Chromohalobacter salexigens (strain ATCC BAA-138 / DSM 3043 / CIP 106854 / NCIMB 13768 / 1H11)).